Consider the following 191-residue polypeptide: ADP-ribosylation factor (191 aa).

Gly2 carries the N-myristoyl glycine lipid modification. GTP-binding positions include Gly24 to Thr31, Asp67 to Gln71, and Asn128 to Asp131.

It belongs to the small GTPase superfamily. Arf family.

It is found in the golgi apparatus. In terms of biological role, GTP-binding protein involved in protein trafficking; may modulate vesicle budding and uncoating within the Golgi apparatus. In Giardia intestinalis (Giardia lamblia), this protein is ADP-ribosylation factor.